The primary structure comprises 665 residues: DNA ligase (665 aa).

NAD(+) contacts are provided by residues 31–35 (DQEFD), 80–81 (SL), and Glu-110. Residue Lys-112 is the N6-AMP-lysine intermediate of the active site. NAD(+) is bound by residues Arg-133, Glu-170, Lys-285, and Lys-309. Residues Cys-403, Cys-406, Cys-421, and Cys-427 each contribute to the Zn(2+) site. The BRCT domain occupies 587–665 (EHTDKLAGKS…SEEEFLQMIE (79 aa)).

The protein belongs to the NAD-dependent DNA ligase family. LigA subfamily. It depends on Mg(2+) as a cofactor. Mn(2+) serves as cofactor.

It carries out the reaction NAD(+) + (deoxyribonucleotide)n-3'-hydroxyl + 5'-phospho-(deoxyribonucleotide)m = (deoxyribonucleotide)n+m + AMP + beta-nicotinamide D-nucleotide.. In terms of biological role, DNA ligase that catalyzes the formation of phosphodiester linkages between 5'-phosphoryl and 3'-hydroxyl groups in double-stranded DNA using NAD as a coenzyme and as the energy source for the reaction. It is essential for DNA replication and repair of damaged DNA. The polypeptide is DNA ligase (Phocaeicola vulgatus (strain ATCC 8482 / DSM 1447 / JCM 5826 / CCUG 4940 / NBRC 14291 / NCTC 11154) (Bacteroides vulgatus)).